Reading from the N-terminus, the 102-residue chain is Acid shock protein (102 aa).

An N-terminal signal peptide occupies residues Met1–Ala21. Positions Ala22 to Lys41 are enriched in low complexity. A propeptide spanning residues Ala22–Gln58 is cleaved from the precursor. Residues Ala22–Ala102 form a disordered region. A compositionally biased stretch (basic residues) spans Ala80 to His90. Residues Gln91–Ala102 show a composition bias toward low complexity.

It belongs to the Asr family. Proteolytic processing gives rise to the active protein.

The protein localises to the periplasm. In terms of biological role, required for growth and/or survival at acidic conditions. This chain is Acid shock protein, found in Escherichia coli (strain 55989 / EAEC).